The chain runs to 607 residues: Type 3 secretion system secretin (607 aa).

An N-terminal signal peptide occupies residues 1-33 (MAPACTTAHRRRAPLAAVLMLSLLPLLSPHADA). A disordered region spans residues 277 to 332 (ASSSDRVPVSPPLPGSGAAAAAGSPASVWPELSKGRRDESNPIDAGGGAELASDAP). Residues 291 to 306 (GSGAAAAAGSPASVWP) are compositionally biased toward low complexity.

Belongs to the bacterial secretin family. T3SS SctC subfamily. In terms of assembly, the core secretion machinery of the T3SS is composed of approximately 20 different proteins, including cytoplasmic components, a base, an export apparatus and a needle. This subunit is part of the base, which anchors the injectisome in the bacterial cell envelope. Forms a stable homooligomeric complex.

Its subcellular location is the cell outer membrane. Its function is as follows. Component of the type III secretion system (T3SS), also called injectisome, which is used to inject bacterial effector proteins into eukaryotic host cells. Forms a ring-shaped multimeric structure with an apparent central pore in the outer membrane. Necessary for both basic pathogenicity and the induction of the hypersensitive response in resistant plants. The sequence is that of Type 3 secretion system secretin from Xanthomonas euvesicatoria.